A 457-amino-acid chain; its full sequence is DDB1- and CUL4-associated factor 10 (457 aa).

WD repeat units lie at residues 65–104 (RTHG…HIKT), 108–146 (AHED…SKAC), 150–189 (GHTS…EDGC), and 195–234 (FHTR…KSLE). The segment covering 246–265 (TASTSDMTSTSSETRPSSSP) has biased composition (low complexity). A disordered region spans residues 246 to 304 (TASTSDMTSTSSETRPSSSPCHNSDSGPLFEKHMSRSSQREGTSPRNSLEVLTPEVPGE). A compositionally biased stretch (polar residues) spans 281 to 292 (RSSQREGTSPRN). 3 WD repeats span residues 306–346 (DRGN…QEGT), 368–406 (VGRG…KELV), and 424–457 (SHKD…QPKF).

The protein belongs to the WD repeat DCAF10 family.

It participates in protein modification; protein ubiquitination. Its function is as follows. May function as a substrate receptor for CUL4-DDB1 E3 ubiquitin-protein ligase complex. This Xenopus laevis (African clawed frog) protein is DDB1- and CUL4-associated factor 10 (dcaf10).